The chain runs to 2363 residues: Highly reducing polyketide synthase cnsI (2363 aa).

In terms of domain architecture, Ketosynthase family 3 (KS3) spans 14 to 440 (PEPIAIIGMS…GSNAHAIVES (427 aa)). Catalysis depends on for beta-ketoacyl synthase activity residues C187, H322, and H363. A malonyl-CoA:ACP transacylase (MAT) domain region spans residues 546–854 (LAFVFTGQGA…FLQVLKSINA (309 aa)). The active-site For malonyltransferase activity is the S638. The tract at residues 938 to 1068 (HDLLGSPMDF…GTFTLHYDAR (131 aa)) is N-terminal hotdog fold. A dehydratase (DH) domain region spans residues 938–1224 (HDLLGSPMDF…RLDSIASDVS (287 aa)). One can recognise a PKS/mFAS DH domain in the interval 938–1246 (HDLLGSPMDF…LGPVPMSKVP (309 aa)). H970 (proton acceptor; for dehydratase activity) is an active-site residue. A C-terminal hotdog fold region spans residues 1089-1246 (TAECETNRDA…LGPVPMSKVP (158 aa)). Catalysis depends on D1159, which acts as the Proton donor; for dehydratase activity. The tract at residues 1669–1976 (GGQWVEDRQL…ARQTGISVAI (308 aa)) is enoylreductase (ER) domain. The interval 2001–2177 (TYLLAGGLGM…PGHSIDIGLV (177 aa)) is catalytic ketoreductase (KRc) domain. Positions 2279-2357 (EDASYVVNQA…VLSEKIAAQS (79 aa)) constitute a Carrier domain. The residue at position 2317 (S2317) is an O-(pantetheine 4'-phosphoryl)serine.

It functions in the pathway alkaloid biosynthesis. Its function is as follows. Highly reducing polyketide synthase; part of the gene cluster that mediates the biosynthesis of communesins, a prominent class of indole alkaloids with great potential as pharmaceuticals. Communesins are biosynthesized by the coupling of tryptamine and aurantioclavine, two building blocks derived from L-tryptophan. The L-tryptophan decarboxylase cnsB converts L-tryptophan to tryptamine, whereas the tryptophan dimethylallyltransferase cnsF converts L-tryptophan to 4-dimethylallyl tryptophan which is further transformed to aurantioclavine by the aurantioclavine synthase cnsA, probably aided by the catalase cnsD. The cytochrome P450 monooxygenase cnsC catalyzes the heterodimeric coupling between the two different indole moieties, tryptamine and aurantioclavine, to construct vicinal quaternary stereocenters and yield the heptacyclic communesin scaffold. The O-methyltransferase cnsE then methylates the communesin scaffold to produce communesin K, the simplest characterized communesin that contains the heptacyclic core. The dioxygenase cnsJ converts communesin K into communesin I. Acylation to introduce the hexadienyl group at position N16 of communesin I by the acyltransferase cnsK leads to the production of communesin B. The hexadienyl group is produced by the highly reducing polyketide synthase cnsI, before being hydrolytically removed from cnsI by the serine hydrolase cnsH, converted into hexadienyl-CoA by the CoA ligase cnsG, and then transferred to communesin I by cnsK. Surprisingly, cnsK may also be a promiscuous acyltransferase that can tolerate a range of acyl groups, including acetyl-, propionyl-, and butyryl-CoA, which lead to communesins A, G and H respectively. The roles of the alpha-ketoglutarate-dependent dioxygenases cnsM and cnsP have still to be determined. The chain is Highly reducing polyketide synthase cnsI from Penicillium expansum (Blue mold rot fungus).